The primary structure comprises 494 residues: MFQVQKELAGHEAVIIALFEEEKMSSFVQELDKAFEGQLQVLLEEKELSTKKKAISKVHSLGKTNVKRYYFVGLGKKESYTTETLRAALGKAFKTLQAAKVQDAAMLLDSFVTEKLDAIDVAHIAAEVQGLGTYELQTYKSDKKDCVELEKFTAITAEDAQEIEAALTVGYVHGRATNSARTLVNMPPNVLTATKLAEYAVELAEKYDMDYKVLEKEEMEDLGMGALLAVNQGSVEPPKMIALIYKGKEEWTDVIGFVGKGITYDTGGYSLKPREGMVGMKGDMGGAAAVLGAMEIIGELRPEQNVIAVIPSTDNVVSGTAFKPDDVITSMSGKTIEVLNTDAEGRLALADGITYAKKLGANYLVDVATLTGGVIVALGNYTTGAMTNNEELFEQVLEASMETDEPIWQLPIFDRDKERVRNSKFADLNNSPGREGHAVMAGTFLGEFAEDTPWVHLDIAGTSETKGAHDLGPAGATGAMVRTLATLVERFGEE.

Residues lysine 260 and aspartate 265 each contribute to the Mn(2+) site. Lysine 272 is an active-site residue. Residues aspartate 283, aspartate 342, and glutamate 344 each coordinate Mn(2+). Arginine 346 is a catalytic residue.

It belongs to the peptidase M17 family. The cofactor is Mn(2+).

It is found in the cytoplasm. It catalyses the reaction Release of an N-terminal amino acid, Xaa-|-Yaa-, in which Xaa is preferably Leu, but may be other amino acids including Pro although not Arg or Lys, and Yaa may be Pro. Amino acid amides and methyl esters are also readily hydrolyzed, but rates on arylamides are exceedingly low.. The catalysed reaction is Release of an N-terminal amino acid, preferentially leucine, but not glutamic or aspartic acids.. In terms of biological role, presumably involved in the processing and regular turnover of intracellular proteins. Catalyzes the removal of unsubstituted N-terminal amino acids from various peptides. In Bacillus cereus (strain B4264), this protein is Probable cytosol aminopeptidase.